The sequence spans 343 residues: Type II restriction enzyme BsuMI component YdiS (343 aa).

In terms of assembly, bsuMI restriction activity requires YdiR, YdiS and YdjA.

The enzyme catalyses Endonucleolytic cleavage of DNA to give specific double-stranded fragments with terminal 5'-phosphates.. A P subtype restriction enzyme that recognizes the double-stranded sequence 5'-CTCGAG-3'; the cleavage site is unknown. This chain is Type II restriction enzyme BsuMI component YdiS (ydiS), found in Bacillus subtilis (strain 168).